A 310-amino-acid polypeptide reads, in one-letter code: Protoheme IX farnesyltransferase 2 (310 aa).

9 helical membrane passes run 21-41, 46-66, 99-119, 125-145, 153-173, 180-200, 226-246, 256-276, and 284-304; these read IWYL…GIYG, IATW…ANVL, FGLF…LTTT, WAAA…SYML, IVLG…AVTT, GLVM…ALTL, VIAV…LITL, VYLA…AWVV, and AWVL…ALMV.

It belongs to the UbiA prenyltransferase family. Protoheme IX farnesyltransferase subfamily.

The protein localises to the cell membrane. It catalyses the reaction heme b + (2E,6E)-farnesyl diphosphate + H2O = Fe(II)-heme o + diphosphate. It functions in the pathway porphyrin-containing compound metabolism; heme O biosynthesis; heme O from protoheme: step 1/1. Functionally, converts heme B (protoheme IX) to heme O by substitution of the vinyl group on carbon 2 of heme B porphyrin ring with a hydroxyethyl farnesyl side group. The sequence is that of Protoheme IX farnesyltransferase 2 from Cenarchaeum symbiosum (strain A).